Here is a 317-residue protein sequence, read N- to C-terminus: Lysosomal-associated transmembrane protein 4B (317 aa).

The tract at residues 25-73 (AFGAKGTDPAEARSSRGIEEAGPRAHGRAGREPERRRSRQQRRGGLQAR) is disordered. The segment covering 32 to 59 (DPAEARSSRGIEEAGPRAHGRAGREPER) has biased composition (basic and acidic residues). The next 4 helical transmembrane spans lie at 117–137 (ILLG…LLSA), 163–183 (MCIA…ATYG), 191–211 (WIIP…LVAI), and 244–264 (CLVL…GYLI). Positions 205-221 (LNMLVAITVLIYPNSIQ) are required for NEDD4 interaction.

This sequence belongs to the LAPTM4/LAPTM5 transporter family. In terms of assembly, homooligomer; upon reaching the lysosomes. Interacts with MCOLN1. Interacts with NEDD4; may play a role in the lysosomal sorting of LAPTM4B; enhances HGS association with NEDD4; mediates inhibition of EGFR degradation. Interacts with PIP5K1C; promotes SNX5 association with LAPTM4B; kinase activity of PIP5K1C is required; interaction is regulated by phosphatidylinositol 4,5-bisphosphate generated by PIP5K1C. Interacts with HGS; promotes HGS ubiquitination. Interacts with SNX5. Interacts with SLC3A2 and SLC7A5; recruits SLC3A2 and SLC7A5 to lysosomes to promote leucine uptake into these organelles and is required for mTORC1 activation. Interacts with LRRC32; decreases TGFB1 production in regulatory T cells. Interacts with BECN1; competes with EGFR for LAPTM4B binding; regulates EGFR activity. Interacts with EGFR; positively correlates with EGFR activation. Post-translationally, undergoes proteolytic cleavage following delivery to the lysosomes. In terms of processing, ubiquitinated by NEDD4.

It is found in the endomembrane system. The protein resides in the late endosome membrane. The protein localises to the cell membrane. Its subcellular location is the cell projection. It localises to the lysosome membrane. It is found in the endosome membrane. The protein resides in the endosome. The protein localises to the multivesicular body membrane. Its subcellular location is the multivesicular body lumen. In terms of biological role, required for optimal lysosomal function. Blocks EGF-stimulated EGFR intraluminal sorting and degradation. Conversely by binding with the phosphatidylinositol 4,5-bisphosphate, regulates its PIP5K1C interaction, inhibits HGS ubiquitination and relieves LAPTM4B inhibition of EGFR degradation. Recruits SLC3A2 and SLC7A5 (the Leu transporter) to the lysosome, promoting entry of leucine and other essential amino acid (EAA) into the lysosome, stimulating activation of proton-transporting vacuolar (V)-ATPase protein pump (V-ATPase) and hence mTORC1 activation. Plays a role as negative regulator of TGFB1 production in regulatory T cells. Binds ceramide and facilitates its exit from late endosome in order to control cell death pathways. The chain is Lysosomal-associated transmembrane protein 4B from Homo sapiens (Human).